The sequence spans 423 residues: Histidine--tRNA ligase (423 aa).

The protein belongs to the class-II aminoacyl-tRNA synthetase family. As to quaternary structure, homodimer.

It is found in the cytoplasm. The enzyme catalyses tRNA(His) + L-histidine + ATP = L-histidyl-tRNA(His) + AMP + diphosphate + H(+). The sequence is that of Histidine--tRNA ligase from Orientia tsutsugamushi (strain Boryong) (Rickettsia tsutsugamushi).